Consider the following 432-residue polypeptide: Adenosine 3'-phospho 5'-phosphosulfate transporter 1 (432 aa).

9 helical membrane-spanning segments follow: residues 5-25 (WWAV…ETPE), 40-60 (VVNA…VQYF), 109-129 (ALKL…WGVL), 154-174 (FLVL…CVLC), 238-258 (WEYL…LSSG), 265-285 (PATT…DSFT), 299-319 (SVQM…GSLL), 353-373 (LFIF…IMTL), and 387-407 (GHTV…ALLL). Position 427 is a phosphoserine (Ser427).

Belongs to the nucleotide-sugar transporter family. SLC35B subfamily.

Its subcellular location is the golgi apparatus membrane. It carries out the reaction 3'-phosphoadenylyl sulfate(in) + adenosine 3',5'-bisphosphate(out) = 3'-phosphoadenylyl sulfate(out) + adenosine 3',5'-bisphosphate(in). Functionally, probably functions as a 3'-phosphoadenylyl sulfate:adenosine 3',5'-bisphosphate antiporter at the Golgi membranes. Mediates the transport from the cytosol into the lumen of the Golgi of 3'-phosphoadenylyl sulfate/adenosine 3'-phospho 5'-phosphosulfate (PAPS), a universal sulfuryl donor for sulfation events that take place in that compartment. The chain is Adenosine 3'-phospho 5'-phosphosulfate transporter 1 from Pongo abelii (Sumatran orangutan).